A 210-amino-acid chain; its full sequence is MQGRFITFEGGEGAGKSTQIAQLTQSLQAHGVKVLCTREPGGCPISERIREILVTGQGDDLDGTSELLLILAARHEHIRQVIRPALASGHWVLCDRFEDSTLAYQGGGRGGDGPWLRQLGQWIRGDVFPDLTLLLDLDPTVGLARSKRRGGQEQRFEQEALSFHQQVRQAFLQMAQQEPQRMIPIDADQPVQMVAATIWREVEGRFFVSF.

Residue 10 to 17 participates in ATP binding; the sequence is GGEGAGKS.

It belongs to the thymidylate kinase family.

The catalysed reaction is dTMP + ATP = dTDP + ADP. In terms of biological role, phosphorylation of dTMP to form dTDP in both de novo and salvage pathways of dTTP synthesis. The sequence is that of Thymidylate kinase from Magnetococcus marinus (strain ATCC BAA-1437 / JCM 17883 / MC-1).